We begin with the raw amino-acid sequence, 266 residues long: 4-hydroxy-tetrahydrodipicolinate reductase (266 aa).

Residue 10-15 participates in NAD(+) binding; that stretch reads GPRGRM. K38 provides a ligand contact to NADP(+). Residues 99–101 and 125–128 contribute to the NAD(+) site; these read GTT and APNF. The active-site Proton donor/acceptor is H155. H156 lines the (S)-2,3,4,5-tetrahydrodipicolinate pocket. The Proton donor role is filled by K159. Residue 165-166 coordinates (S)-2,3,4,5-tetrahydrodipicolinate; the sequence is GT.

This sequence belongs to the DapB family.

The protein localises to the cytoplasm. The catalysed reaction is (S)-2,3,4,5-tetrahydrodipicolinate + NAD(+) + H2O = (2S,4S)-4-hydroxy-2,3,4,5-tetrahydrodipicolinate + NADH + H(+). It carries out the reaction (S)-2,3,4,5-tetrahydrodipicolinate + NADP(+) + H2O = (2S,4S)-4-hydroxy-2,3,4,5-tetrahydrodipicolinate + NADPH + H(+). The protein operates within amino-acid biosynthesis; L-lysine biosynthesis via DAP pathway; (S)-tetrahydrodipicolinate from L-aspartate: step 4/4. Functionally, catalyzes the conversion of 4-hydroxy-tetrahydrodipicolinate (HTPA) to tetrahydrodipicolinate. This Bacillus cytotoxicus (strain DSM 22905 / CIP 110041 / 391-98 / NVH 391-98) protein is 4-hydroxy-tetrahydrodipicolinate reductase.